We begin with the raw amino-acid sequence, 72 residues long: Cytochrome b-c1 complex subunit 9 (72 aa).

The Mitochondrial matrix portion of the chain corresponds to 1–27 (MESAARRSGGGVLEGFYRLVMRRTPVY). The chain crosses the membrane as a helical span at residues 28–53 (VTFVIAGALLGERAVDYGVKTLWEKN). Residues 54–72 (NVGKRYEDISVLGQRPVDE) are Mitochondrial intermembrane-facing.

This sequence belongs to the UQCR10/QCR9 family. In terms of assembly, component of the ubiquinol-cytochrome c oxidoreductase (cytochrome b-c1 complex, complex III, CIII), a multisubunit enzyme composed of 3 respiratory subunits cytochrome b, cytochrome c1 and Rieske protein, 2 core protein subunits, and additional low-molecular weight protein subunits. The complex exists as an obligatory dimer and forms supercomplexes (SCs) in the inner mitochondrial membrane with cytochrome c oxidase (complex IV, CIV).

The protein localises to the mitochondrion inner membrane. Functionally, component of the ubiquinol-cytochrome c oxidoreductase, a multisubunit transmembrane complex that is part of the mitochondrial electron transport chain which drives oxidative phosphorylation. The respiratory chain contains 3 multisubunit complexes succinate dehydrogenase (complex II, CII), ubiquinol-cytochrome c oxidoreductase (cytochrome b-c1 complex, complex III, CIII) and cytochrome c oxidase (complex IV, CIV), that cooperate to transfer electrons derived from NADH and succinate to molecular oxygen, creating an electrochemical gradient over the inner membrane that drives transmembrane transport and the ATP synthase. The cytochrome b-c1 complex catalyzes electron transfer from ubiquinol to cytochrome c, linking this redox reaction to translocation of protons across the mitochondrial inner membrane, with protons being carried across the membrane as hydrogens on the quinol. In the process called Q cycle, 2 protons are consumed from the matrix, 4 protons are released into the intermembrane space and 2 electrons are passed to cytochrome c. The polypeptide is Cytochrome b-c1 complex subunit 9 (Solanum tuberosum (Potato)).